The primary structure comprises 224 residues: MNSAWALLRLASPQLPIGGYSYSQGLEMAVEQSIVIDPQTAGRWIGDQLLLNLARFEAPLLLAHCEAAAVGDWGQLLQVSEQHRASRETRELHQESRQMGYSLQQLLNGLPELDRDARRFLEQTTEPHLALGWALAARTWRISPQDALAAWLWSWLENQLAVLMKTLPLGQQAAQRLTSELLPLLQQAQVNASAQDTHPAGSAAFGLALASMAHERQYSRLFRS.

It belongs to the UreF family. In terms of assembly, ureD, UreF and UreG form a complex that acts as a GTP-hydrolysis-dependent molecular chaperone, activating the urease apoprotein by helping to assemble the nickel containing metallocenter of UreC. The UreE protein probably delivers the nickel.

It is found in the cytoplasm. Functionally, required for maturation of urease via the functional incorporation of the urease nickel metallocenter. The protein is Urease accessory protein UreF 2 of Pseudomonas syringae pv. tomato (strain ATCC BAA-871 / DC3000).